The sequence spans 346 residues: Magnesium-protoporphyrin IX monomethyl ester [oxidative] cyclase (346 aa).

Belongs to the AcsF family. The cofactor is Fe cation.

The enzyme catalyses Mg-protoporphyrin IX 13-monomethyl ester + 3 NADPH + 3 O2 + 2 H(+) = 3,8-divinyl protochlorophyllide a + 3 NADP(+) + 5 H2O. It functions in the pathway porphyrin-containing compound metabolism; chlorophyll biosynthesis (light-independent). Catalyzes the formation of the isocyclic ring in chlorophyll biosynthesis. Mediates the cyclase reaction, which results in the formation of divinylprotochlorophyllide (Pchlide) characteristic of all chlorophylls from magnesium-protoporphyrin IX 13-monomethyl ester (MgPMME). This Gloeobacter violaceus (strain ATCC 29082 / PCC 7421) protein is Magnesium-protoporphyrin IX monomethyl ester [oxidative] cyclase.